Here is a 260-residue protein sequence, read N- to C-terminus: Proteasome subunit alpha (260 aa).

Belongs to the peptidase T1A family. The 20S proteasome core is composed of 14 alpha and 14 beta subunits that assemble into four stacked heptameric rings, resulting in a barrel-shaped structure. The two inner rings, each composed of seven catalytic beta subunits, are sandwiched by two outer rings, each composed of seven alpha subunits. The catalytic chamber with the active sites is on the inside of the barrel. Has a gated structure, the ends of the cylinder being occluded by the N-termini of the alpha-subunits. Is capped at one or both ends by the proteasome regulatory ATPase, PAN.

It is found in the cytoplasm. The formation of the proteasomal ATPase PAN-20S proteasome complex, via the docking of the C-termini of PAN into the intersubunit pockets in the alpha-rings, triggers opening of the gate for substrate entry. Interconversion between the open-gate and close-gate conformations leads to a dynamic regulation of the 20S proteasome proteolysis activity. In terms of biological role, component of the proteasome core, a large protease complex with broad specificity involved in protein degradation. The protein is Proteasome subunit alpha of Thermococcus onnurineus (strain NA1).